Consider the following 142-residue polypeptide: Large ribosomal subunit protein uL13 (142 aa).

Belongs to the universal ribosomal protein uL13 family. As to quaternary structure, part of the 50S ribosomal subunit.

Functionally, this protein is one of the early assembly proteins of the 50S ribosomal subunit, although it is not seen to bind rRNA by itself. It is important during the early stages of 50S assembly. The protein is Large ribosomal subunit protein uL13 of Pseudoalteromonas translucida (strain TAC 125).